The chain runs to 39 residues: Sarcotoxin-1C (39 aa).

Arg39 is subject to Arginine amide.

This sequence belongs to the cecropin family.

It is found in the secreted. Sarcotoxins, which are potent bactericidal proteins, are produced in response to injury. They are cytotoxic to both Gram-positive and Gram-negative bacteria. In Sarcophaga peregrina (Flesh fly), this protein is Sarcotoxin-1C.